The sequence spans 565 residues: Augmin complex subunit dgt3 (565 aa).

Coiled coils occupy residues 135–171 (ELQL…AKKA) and 212–241 (QDYD…IQFY).

This sequence belongs to the HAUS3 family. In terms of assembly, component of the augmin complex composed of dgt2, dgt3, dgt4, dgt5, dgt6, msd1, msd5 and wac. The complex interacts directly or indirectly with microtubules and is required for centrosome-independent generation of spindle microtubules.

The protein resides in the cytoplasm. It localises to the cytoskeleton. The protein localises to the spindle. As part of the augmin complex, plays a role in centrosome-independent generation of spindle microtubules. The complex is required for mitotic spindle assembly through its involvement in localizing gamma-tubulin to spindle microtubules. This is Augmin complex subunit dgt3 from Drosophila melanogaster (Fruit fly).